We begin with the raw amino-acid sequence, 489 residues long: uncharacterized protein (489 aa).

12 helical membrane-spanning segments follow: residues 14–34 (LLFV…ISLF), 36–56 (LGPF…IVTL), 100–120 (IIGP…FSGI), 127–147 (LVNT…LAFI), 158–178 (LIAL…IVAI), 203–223 (EISF…YAGV), 241–261 (ILIV…IILN), 286–306 (AAGL…NVST), 344–364 (IWFT…IPLV), 380–400 (VGSA…FKFI), 419–439 (LFCL…FPVI), and 449–469 (HTLT…LFLL).

This sequence to M.genitalium MG226.

Its subcellular location is the cell membrane. This is an uncharacterized protein from Mycoplasma genitalium (strain ATCC 33530 / DSM 19775 / NCTC 10195 / G37) (Mycoplasmoides genitalium).